Reading from the N-terminus, the 448-residue chain is MEVDNKRRHSEDELKQEAVKKIKSQEPNYAYLETVVREKLDFDSEKICCITLSPLNVYCCLVCGHYYQGRHEKSPAFIHSIDENHHVFLNLTSLKFYMLPQNVQILHDGEVQLLNSIKFAAYPTYCPKDLEDFPRQCFDLSNRTYLNGFIGFTNAATYDYAHSVLLLISHMVPVRDHFLLNHFDNQGEFIKRLSICVKKIWSPKLFKHHLSVDDFVSYLKVREGLNLNPIDPRLFLLWLFNKICSSSNDLKSILNHSCKGKVKIAKVENKPEASESVTGKVIVKPFWVLTLDLPEFSPFEDGNSVDDLPQINITKLLTKFTKSRSSSTSTVFELTRLPQFLIFHFNRFDRNSDHPVKNRNQTLVEFSSELEILHVKYRLKANVVHVVIKQPSTDGNAFNGDEKSHWITQLYDNKSEKWIEIDGINTTEREAELLFLKETFIQVWEKQE.

Methionine 1 is modified (N-acetylmethionine). A UBP-type; degenerate zinc finger spans residues 27–124 (PNYAYLETVV…NSIKFAAYPT (98 aa)). Positions 60, 63, 79, and 85 each coordinate Zn(2+). The USP domain maps to 150-447 (IGFTNAATYD…ETFIQVWEKQ (298 aa)).

Component of the 45S U1.U2.U4/U6.U5 penta-snRNP particle, a subcomplex of the spliceosome.

The protein localises to the nucleus. Functionally, promotes the assembly of newly synthesized U4 snRNA into the U4/U6 snRNP particle. Required for splicing of pre-mRNA. This Saccharomyces cerevisiae (strain ATCC 204508 / S288c) (Baker's yeast) protein is Pre-mRNA-splicing factor SAD1 (SAD1).